We begin with the raw amino-acid sequence, 199 residues long: Probable nicotinate-nucleotide adenylyltransferase (199 aa).

Belongs to the NadD family.

It catalyses the reaction nicotinate beta-D-ribonucleotide + ATP + H(+) = deamido-NAD(+) + diphosphate. The protein operates within cofactor biosynthesis; NAD(+) biosynthesis; deamido-NAD(+) from nicotinate D-ribonucleotide: step 1/1. In terms of biological role, catalyzes the reversible adenylation of nicotinate mononucleotide (NaMN) to nicotinic acid adenine dinucleotide (NaAD). This chain is Probable nicotinate-nucleotide adenylyltransferase, found in Rhizobium johnstonii (strain DSM 114642 / LMG 32736 / 3841) (Rhizobium leguminosarum bv. viciae).